A 695-amino-acid chain; its full sequence is A-kinase anchor protein 17A (695 aa).

Residues 83–112 (VENKSLVKSFLACLDGKTIKLSGFSDILKV) are PKA-RI and PKA-RII subunit binding domain. Lys118 is covalently cross-linked (Glycyl lysine isopeptide (Lys-Gly) (interchain with G-Cter in SUMO1); alternate). A Glycyl lysine isopeptide (Lys-Gly) (interchain with G-Cter in SUMO2); alternate cross-link involves residue Lys118. In terms of domain architecture, RRM spans 147–256 (DTIHLEGLPC…KAVACNIKVS (110 aa)). The disordered stretch occupies residues 279 to 337 (QELEQQREEQKRREKEAEERQRAEERKQKELEELERERKREEKLRKREQKQRDRELRRN). The tract at residues 425 to 454 (LGLQRKERELRERLLSILLSKKPDDSHTHD) is PKA-RI-alpha subunit binding domain. The disordered stretch occupies residues 482–695 (TTLHPLGGQP…PSRHRSTWNR (214 aa)). Phosphoserine is present on Ser537. The segment covering 567 to 585 (VSRKDTRSEQDKCNREPSK) has biased composition (basic and acidic residues). Composition is skewed to basic residues over residues 598-609 (RHKRERSRARRA) and 618-628 (RKERRPHKKHA). Residues 629–644 (YKDDSPRRRSTSPDHT) show a composition bias toward basic and acidic residues. Phosphoserine is present on Ser633. Composition is skewed to basic residues over residues 645–658 (RSRR…HRRE) and 666–695 (SASR…TWNR).

As to quaternary structure, monomer. Component of the spliceosome. Interacts with ZRANB2 and SFRS1/ASF through its Arg/Ser-rich domain. Interacts with RI and RII subunits of PKA. In terms of tissue distribution, widely expressed. Found in heart, brain, lung, liver, skeletal muscle, kidney and pancreas. Expressed in activated B-cells and placenta. Expressed in all cell lines tested including Jurkat-TAg, U-937 and HEK293 cells.

It is found in the nucleus speckle. Functionally, splice factor regulating alternative splice site selection for certain mRNA precursors. Mediates regulation of pre-mRNA splicing in a PKA-dependent manner. The protein is A-kinase anchor protein 17A (AKAP17A) of Homo sapiens (Human).